A 183-amino-acid chain; its full sequence is ATP synthase subunit b, chloroplastic (183 aa).

The helical transmembrane segment at 25–45 (DILATNLINLTVVVGVLIFFG) threads the bilayer.

The protein belongs to the ATPase B chain family. F-type ATPases have 2 components, F(1) - the catalytic core - and F(0) - the membrane proton channel. F(1) has five subunits: alpha(3), beta(3), gamma(1), delta(1), epsilon(1). F(0) has four main subunits: a(1), b(1), b'(1) and c(10-14). The alpha and beta chains form an alternating ring which encloses part of the gamma chain. F(1) is attached to F(0) by a central stalk formed by the gamma and epsilon chains, while a peripheral stalk is formed by the delta, b and b' chains.

Its subcellular location is the plastid. The protein localises to the chloroplast thylakoid membrane. F(1)F(0) ATP synthase produces ATP from ADP in the presence of a proton or sodium gradient. F-type ATPases consist of two structural domains, F(1) containing the extramembraneous catalytic core and F(0) containing the membrane proton channel, linked together by a central stalk and a peripheral stalk. During catalysis, ATP synthesis in the catalytic domain of F(1) is coupled via a rotary mechanism of the central stalk subunits to proton translocation. Functionally, component of the F(0) channel, it forms part of the peripheral stalk, linking F(1) to F(0). This chain is ATP synthase subunit b, chloroplastic, found in Sorghum bicolor (Sorghum).